A 1140-amino-acid polypeptide reads, in one-letter code: Condensin-2 complex subunit G2 (1140 aa).

Residues 460-493 (LLPALKSSLHDSSEKVRVAFVGMLLKIKAARAAK) form an HEAT repeat.

As to quaternary structure, component of the condensin-2 complex, which contains the smc2 and smc4 heterodimer, and three non SMC subunits that probably regulate the complex: ncaph2, ncapd3 and ncapg2.

It localises to the nucleus. Regulatory subunit of the condensin-2 complex, a complex which establishes mitotic chromosome architecture and is involved in physical rigidity of the chromatid axis. Plays a role in the embryonic development of the head and kidney structures. The sequence is that of Condensin-2 complex subunit G2 from Danio rerio (Zebrafish).